Reading from the N-terminus, the 224-residue chain is Claudin-17 (224 aa).

At 1-7 (MAFYPLQ) the chain is on the cytoplasmic side. The chain crosses the membrane as a helical span at residues 8 to 28 (IAGLVLGFLGMVGTLATTLLP). The Extracellular segment spans residues 29-81 (QWRVSAFVGSNIIVFERLWEGLWMNCIRQARVRLQCKFYSSLLALPPALETAR). Residues 82–102 (ALMCVAVALSLIALLIGICGM) form a helical membrane-spanning segment. Residues 103 to 124 (KQVQCTGSNERAKAYLLGTSGV) are Cytoplasmic-facing. A helical membrane pass occupies residues 125–145 (LFILTGIFVLIPVSWTANIII). The Extracellular segment spans residues 146–164 (RDFYNPAIHIGQKRELGAA). A helical membrane pass occupies residues 165–185 (LFLGWASAAVLFIGGGLLCGF). Residues 186 to 224 (CCCNRKKQGYRYPVPGYRVPHTDKRRNTTMLSKTSTSYV) are Cytoplasmic-facing.

Belongs to the claudin family. Cannot form tight junction strands on its own. Interacts with OCLN. In the kidney, expressed in the proximal tubule and in the Henle's loop. In the distal convoluted tubule, not expressed in all tubules. Not detected in the collecting duct (at protein level).

Its subcellular location is the cell junction. The protein localises to the tight junction. The protein resides in the basolateral cell membrane. The catalysed reaction is chloride(in) = chloride(out). It catalyses the reaction hydrogencarbonate(in) = hydrogencarbonate(out). It carries out the reaction bromide(in) = bromide(out). The enzyme catalyses iodide(out) = iodide(in). The catalysed reaction is fluoride(in) = fluoride(out). It catalyses the reaction nitrate(in) = nitrate(out). It carries out the reaction thiocyanate(in) = thiocyanate(out). In terms of biological role, channel-forming tight junction protein with selectivity for anions, including chloride and hydrogencarbonate, and for solutes smaller than 9 Angstrom in diameter. In the kidney proximal tubule, may be involved in paracellular reabsorption of filtered anions. Does not affect water permeability. The polypeptide is Claudin-17 (CLDN17) (Homo sapiens (Human)).